A 614-amino-acid chain; its full sequence is Deoxynucleoside triphosphate triphosphohydrolase SAMHD1 (614 aa).

Positions 1 to 13 are enriched in low complexity; sequence MGSPAAGWGAAPA. The tract at residues 1-33 is disordered; the sequence is MGSPAAGWGAAPAKRARREGSAESSCGSPADRD. An SAM domain is found at 37–102; that stretch reads WDTERLCQHL…LACLNQLRQT (66 aa). GTP contacts are provided by lysine 107 and valine 108. Asparagine 110 provides a ligand contact to dGTP. Residues aspartate 128, glutamine 133, and arginine 136 each coordinate GTP. Residues glutamine 140, leucine 141, valine 147, and arginine 155 each coordinate dGTP. Residue glutamine 140 coordinates dATP. Glutamine 140 lines the dCTP pocket. Glutamine 140 contributes to the dTTP binding site. Arginine 155 lines the dATP pocket. Arginine 155 contacts dCTP. Arginine 155 contacts dTTP. The HD domain occupies 155-307; that stretch reads RFEHSLGVGY…GIDVDKWDYF (153 aa). Histidine 158, histidine 197, and aspartate 198 together coordinate Mn(2+). 2 residues coordinate dATP: histidine 201 and histidine 206. DCTP-binding residues include histidine 201 and histidine 206. 2 residues coordinate dTTP: histidine 201 and histidine 206. The active site involves histidine 224. Residue aspartate 302 participates in Mn(2+) binding. DGTP contacts are provided by lysine 303, tyrosine 306, aspartate 310, arginine 324, arginine 343, lysine 345, asparagine 349, arginine 357, tyrosine 365, glutamine 366, histidine 367, and lysine 368. The dATP site is built by lysine 303, tyrosine 306, and aspartate 310. The dCTP site is built by lysine 303, tyrosine 306, and aspartate 310. The dTTP site is built by lysine 303, tyrosine 306, and aspartate 310. Residue arginine 357 coordinates dATP. Arginine 357 provides a ligand contact to dCTP. Glutamine 366 is a dATP binding site. Glutamine 366 lines the dCTP pocket. Glutamine 366 serves as a coordination point for dTTP. GTP-binding residues include arginine 442, lysine 446, and lysine 515. A dGTP-binding site is contributed by lysine 515.

The protein belongs to the SAMHD1 family. Homodimer; in absence of GTP and dNTP. Homotetramer; in GTP- and dNTP-bound form. Interacts with rbbp8/CtIP. Requires Zn(2+) as cofactor.

The protein localises to the nucleus. Its subcellular location is the chromosome. The catalysed reaction is a 2'-deoxyribonucleoside 5'-triphosphate + H2O = a 2'-deoxyribonucleoside + triphosphate + H(+). It catalyses the reaction dATP + H2O = 2'-deoxyadenosine + triphosphate + H(+). It carries out the reaction dCTP + H2O = 2'-deoxycytidine + triphosphate + H(+). The enzyme catalyses dGTP + H2O = 2'-deoxyguanosine + triphosphate + H(+). The catalysed reaction is dTTP + H2O = thymidine + triphosphate + H(+). Allosterically activated and regulated via the combined actions of GTP and dNTPs (dATP, dGTP, dTTP and dCTP): Allosteric site 1 binds GTP, while allosteric site 2 binds dNTP. Allosteric activation promotes the formation of highly active homotetramers. In terms of biological role, protein that acts both as a host restriction factor involved in defense response to virus and as a regulator of DNA end resection at stalled replication forks. Has deoxynucleoside triphosphate (dNTPase) activity, which is required to restrict infection by viruses: dNTPase activity reduces cellular dNTP levels to levels too low for retroviral reverse transcription to occur, blocking early-stage virus replication in dendritic and other myeloid cells. Functions during S phase at stalled DNA replication forks to promote the resection of gapped or reversed forks: acts by stimulating the exonuclease activity of MRE11, activating the ATR-CHK1 pathway and allowing the forks to restart replication. Its ability to promote degradation of nascent DNA at stalled replication forks is required to prevent induction of type I interferons, thereby preventing chronic inflammation. Ability to promote DNA end resection at stalled replication forks is independent of dNTPase activity. This is Deoxynucleoside triphosphate triphosphohydrolase SAMHD1 from Gallus gallus (Chicken).